Consider the following 358-residue polypeptide: NADH-quinone oxidoreductase subunit H (358 aa).

8 helical membrane-spanning segments follow: residues 20–40 (ITVGLVVSVIVKIVIILIPLI), 95–115 (ALFYIGPIMSLAPSFAAWAVI), 128–148 (IGLLYILMITSLSVYGVIIAG), 168–188 (ISYEIAMSAALVCVVMVSGSM), 206–226 (VFSWNWLPLFPIFIVYLISAV), 253–273 (GFAFALFFLAEYIFMILISAL), 290–310 (WGFIGTPSAFWMFVKMAAVLY), and 334–354 (VLIPIGFAYIVVLGVWMISPL).

Belongs to the complex I subunit 1 family. In terms of assembly, NDH-1 is composed of 14 different subunits. Subunits NuoA, H, J, K, L, M, N constitute the membrane sector of the complex.

It localises to the cell inner membrane. It carries out the reaction a quinone + NADH + 5 H(+)(in) = a quinol + NAD(+) + 4 H(+)(out). NDH-1 shuttles electrons from NADH, via FMN and iron-sulfur (Fe-S) centers, to quinones in the respiratory chain. The immediate electron acceptor for the enzyme in this species is believed to be ubiquinone. Couples the redox reaction to proton translocation (for every two electrons transferred, four hydrogen ions are translocated across the cytoplasmic membrane), and thus conserves the redox energy in a proton gradient. This subunit may bind ubiquinone. In Neisseria meningitidis serogroup C (strain 053442), this protein is NADH-quinone oxidoreductase subunit H.